The primary structure comprises 862 residues: Probable glutaminase ARB_05535/05536 (862 aa).

An N-terminal signal peptide occupies residues 1 to 19 (MLSWVLLAWAVACSALAGA). Asparagine 106, asparagine 273, asparagine 436, asparagine 448, asparagine 486, asparagine 610, and asparagine 744 each carry an N-linked (GlcNAc...) asparagine glycan. The tract at residues 798 to 862 (FLDDKDNNSP…SQMTIVNEND (65 aa)) is disordered. Over residues 853–862 (SQMTIVNEND) the composition is skewed to polar residues.

The protein belongs to the fungal glutaminase gtaA family.

Its subcellular location is the secreted. The catalysed reaction is L-glutamine + H2O = L-glutamate + NH4(+). Its function is as follows. Glutaminase catalyzes the hydrolysis of glutamine to glutamic acid and plays a key role in nitrogen metabolism. The protein is Probable glutaminase ARB_05535/05536 of Arthroderma benhamiae (strain ATCC MYA-4681 / CBS 112371) (Trichophyton mentagrophytes).